The sequence spans 156 residues: Cytochrome c-type biogenesis protein CcmE 2 (156 aa).

Residues 1–8 (MNPQRRRR) are Cytoplasmic-facing. The helical; Signal-anchor for type II membrane protein transmembrane segment at 9–29 (LWLVLALVLAGGLATTLVAMA) threads the bilayer. Residues 30–156 (LQRNVAYLYT…AAAGQVGERQ (127 aa)) lie on the Periplasmic side of the membrane. 2 residues coordinate heme: H123 and Y127. The segment at 136-156 (MGSAHRKHDVPAAAGQVGERQ) is disordered.

The protein belongs to the CcmE/CycJ family.

The protein localises to the cell inner membrane. Its function is as follows. Heme chaperone required for the biogenesis of c-type cytochromes. Transiently binds heme delivered by CcmC and transfers the heme to apo-cytochromes in a process facilitated by CcmF and CcmH. The sequence is that of Cytochrome c-type biogenesis protein CcmE 2 from Xanthomonas axonopodis pv. citri (strain 306).